Consider the following 98-residue polypeptide: MKTLSEIKEILRKHKKILKEKYKVKSIAIFGSYAREEQKETSDIDILIDYYEPISLLKLIELENYLSDLLGIKVDLITKNSIHNPYVKKSIEEDLIYI.

The short motif at 31–45 (GSYAREEQKETSDID) is the GSX(10)DXD motif element. Mg(2+)-binding residues include aspartate 43, aspartate 45, and aspartate 75.

The protein belongs to the MntA antitoxin family. Probably forms a complex with cognate toxin MJ1216. The cofactor is Mg(2+).

The enzyme catalyses L-tyrosyl-[protein] + ATP = O-(5'-adenylyl)-L-tyrosyl-[protein] + diphosphate. It catalyses the reaction O-(5'-adenylyl)-L-tyrosyl-[protein] + ATP = O-[5'-(adenylyl-(5'-&gt;3')-adenylyl)]-L-tyrosyl-[protein] + diphosphate. In terms of biological role, probable antitoxin component of a putative type VII toxin-antitoxin (TA) system. Neutralizes cognate toxic MJ1216 by di-AMPylation. This Methanocaldococcus jannaschii (strain ATCC 43067 / DSM 2661 / JAL-1 / JCM 10045 / NBRC 100440) (Methanococcus jannaschii) protein is Putative protein adenylyltransferase MJ1217.